We begin with the raw amino-acid sequence, 491 residues long: Carboxypeptidase SOL1 (491 aa).

A signal peptide spans Met-1–Ala-25. At Arg-26–Asn-452 the chain is on the extracellular side. Asn-39 is a glycosylation site (N-linked (GlcNAc...) asparagine). The Peptidase M14 domain maps to Gly-64–Leu-338. His-125 and Glu-128 together coordinate Zn(2+). Residues His-125–Glu-128 and Asn-186–Arg-187 contribute to the substrate site. Zn(2+) is bound at residue His-226. Residue Asn-268 is glycosylated (N-linked (GlcNAc...) asparagine). Substrate is bound at residue Tyr-286. Glu-308 serves as the catalytic Proton donor/acceptor. The helical transmembrane segment at Asn-453–Leu-470 threads the bilayer. Topologically, residues Gln-471–Val-491 are cytoplasmic.

It belongs to the peptidase M14 family. Requires Zn(2+) as cofactor. Expressed in roots, shoots, leaves, flowers and siliques.

The protein localises to the endosome membrane. Functionally, possesses in vitro carboxypeptidase activity against the C-terminal arginine and lysine residues. Involved in the maturation of CLE19. Removes the C-terminal arginine residue of CLE19 proprotein. The cleavage of the C-terminal arginine residue is necessary for CLE19 activity in vivo. Is not involved in generating active CLV3. Is not involved in CLE19 or CLV3 perception. The sequence is that of Carboxypeptidase SOL1 from Arabidopsis thaliana (Mouse-ear cress).